The chain runs to 2260 residues: Protein Ycf2 (2260 aa).

Residue 1614–1621 (GSIGTGRS) coordinates ATP.

It belongs to the Ycf2 family.

It localises to the plastid. It is found in the chloroplast stroma. Probable ATPase of unknown function. Its presence in a non-photosynthetic plant (Epifagus virginiana) and experiments in tobacco indicate that it has an essential function which is probably not related to photosynthesis. The polypeptide is Protein Ycf2 (Dioscorea elephantipes (Elephant's foot yam)).